A 470-amino-acid polypeptide reads, in one-letter code: Neuraminidase (470 aa).

The Intravirion portion of the chain corresponds to 1–6 (MNPNQK). The chain crosses the membrane as a helical span at residues 7–27 (IITIGSICMAIGIISLILQIG). The interval 11–33 (GSICMAIGIISLILQIGNIISIW) is involved in apical transport and lipid raft association. At 28-470 (NIISIWVSHS…GAELPFTIDK (443 aa)) the chain is on the virion surface side. The hypervariable stalk region stretch occupies residues 36-90 (HSIQTGSQNHTGICNQRIITYENSTWVNQTYVNISNTNVVAGKDTTSMTLAGNSS). 5 N-linked (GlcNAc...) asparagine; by host glycosylation sites follow: N44, N58, N63, N68, and N88. Residues 91-470 (LCPIRGWAIY…GAELPFTIDK (380 aa)) are head of neuraminidase. Intrachain disulfides connect C92–C417, C124–C129, C184–C231, C233–C238, C279–C292, C281–C290, C318–C335, and C421–C447. Position 118 (R118) interacts with substrate. N146 carries an N-linked (GlcNAc...) asparagine; by host glycan. D151 (proton donor/acceptor) is an active-site residue. R152 serves as a coordination point for substrate. N235 carries an N-linked (GlcNAc...) asparagine; by host glycan. 277–278 (EE) lines the substrate pocket. N-linked (GlcNAc...) asparagine; by host glycosylation occurs at N285. R293 provides a ligand contact to substrate. Ca(2+)-binding residues include D294, G298, and D324. N365 is a glycosylation site (N-linked (GlcNAc...) asparagine; by host). R368 is a binding site for substrate. The Nucleophile role is filled by Y402. N455 carries an N-linked (GlcNAc...) asparagine; by host glycan.

Belongs to the glycosyl hydrolase 34 family. In terms of assembly, homotetramer. The cofactor is Ca(2+). Post-translationally, N-glycosylated.

Its subcellular location is the virion membrane. The protein localises to the host apical cell membrane. The catalysed reaction is Hydrolysis of alpha-(2-&gt;3)-, alpha-(2-&gt;6)-, alpha-(2-&gt;8)- glycosidic linkages of terminal sialic acid residues in oligosaccharides, glycoproteins, glycolipids, colominic acid and synthetic substrates.. Inhibited by the neuraminidase inhibitors zanamivir (Relenza) and oseltamivir (Tamiflu). These drugs interfere with the release of progeny virus from infected cells and are effective against all influenza strains. Resistance to neuraminidase inhibitors is quite rare. In terms of biological role, catalyzes the removal of terminal sialic acid residues from viral and cellular glycoconjugates. Cleaves off the terminal sialic acids on the glycosylated HA during virus budding to facilitate virus release. Additionally helps virus spread through the circulation by further removing sialic acids from the cell surface. These cleavages prevent self-aggregation and ensure the efficient spread of the progeny virus from cell to cell. Otherwise, infection would be limited to one round of replication. Described as a receptor-destroying enzyme because it cleaves a terminal sialic acid from the cellular receptors. May facilitate viral invasion of the upper airways by cleaving the sialic acid moieties on the mucin of the airway epithelial cells. Likely to plays a role in the budding process through its association with lipid rafts during intracellular transport. May additionally display a raft-association independent effect on budding. Plays a role in the determination of host range restriction on replication and virulence. Sialidase activity in late endosome/lysosome traffic seems to enhance virus replication. The polypeptide is Neuraminidase (Influenza A virus (strain A/Kiev/59/1979 H1N1)).